The chain runs to 614 residues: Nuclear receptor subfamily 1 group D member 1 (614 aa).

The segment covering 1 to 48 (MTTLDSNNNTGGVITYIGSSGSSPNRTSPESLYSDSSNGSFQSLTQGC) has biased composition (polar residues). Positions 1 to 70 (MTTLDSNNNT…TQDPARSFGS (70 aa)) are required for phosphorylation by CSNK1E and cytoplasmic localization. Residues 1–120 (MTTLDSNNNT…GNRVSPSKST (120 aa)) form a disordered region. The modulating stretch occupies residues 1–129 (MTTLDSNNNT…TSNITKLNGM (129 aa)). Residues 49 to 285 (PTYFPPSPTG…PPRSPSPEPT (237 aa)) are crucial for activation of GJA1. Phosphoserine; by GSK3-beta occurs at positions 55 and 59. Over residues 69–103 (GSIPPSLGDDGSPSSSSSSSSSSSSSFYNGSPPGG) the composition is skewed to low complexity. Positions 130–206 (VLLCKVCGDV…VGMSRDAVRF (77 aa)) form a DNA-binding region, nuclear receptor. 2 NR C4-type zinc fingers span residues 133-153 (CKVCGDVASGFHYGVHACEGC) and 170-194 (CLKNENCSIVRINRNRCQQCRFKKC). N6-acetyllysine; by KAT5 is present on residues K192 and K193. A disordered region spans residues 233–286 (SSQCPLETPPTQHPTPGPMGPSPPPAPAPSPLVGFSQFPQQLTPPRSPSPEPTV). The segment covering 239 to 262 (ETPPTQHPTPGPMGPSPPPAPAPS) has biased composition (pro residues). Phosphothreonine; by CDK1 is present on T275. An NR LBD domain is found at 285–614 (TVEDVISQVA…KLLSFRVDAQ (330 aa)). A heme-binding site is contributed by C418. K591 is subject to N6-acetyllysine. Position 602 (H602) interacts with heme.

Belongs to the nuclear hormone receptor family. NR1 subfamily. As to quaternary structure, binds DNA as a monomer or a homodimer. Interacts with C1D, NR2E3, SP1 and ZNHIT1. Interacts with OPHN1 (via C-terminus). Interacts with PER2; the interaction associates PER2 to BMAL1 promoter region. Interacts with CRY1. Interacts with CCAR2. Interacts with SIAH2. Interacts with FBXW7 and CDK1. Interacts with HUWE1. Interacts with NR0B2. Interacts with NFIL3. Interacts (via domain NR LBD) with HSP90AA1 and HSP90AB1. Ubiquitinated, leading to its proteasomal degradation. Ubiquitinated by the SCF(FBXW7) complex when phosphorylated by CDK1 leading to its proteasomal degradation. Ubiquitinated by SIAH2; leading to its proteasomal degradation. Rapidly ubiquitinated in response to inflammatory triggers and sumoylation is a prerequisite to its ubiquitination. Post-translationally, sumoylated by UBE2I, desumoylated by SENP1, and sumoylation is a prerequisite to its ubiquitination. In terms of processing, phosphorylated by CSNK1E; phosphorylation enhances its cytoplasmic localization. Undergoes lysosome-mediated degradation in a time-dependent manner in the liver. In terms of tissue distribution, expressed in all tissues and cell lines examined. Expressed at high levels in some squamous carcinoma cell lines.

The protein localises to the nucleus. Its subcellular location is the cytoplasm. The protein resides in the cell projection. It is found in the dendrite. It localises to the dendritic spine. In terms of biological role, transcriptional repressor which coordinates circadian rhythm and metabolic pathways in a heme-dependent manner. Integral component of the complex transcription machinery that governs circadian rhythmicity and forms a critical negative limb of the circadian clock by directly repressing the expression of core clock components BMAL1, CLOCK and CRY1. Also regulates genes involved in metabolic functions, including lipid and bile acid metabolism, adipogenesis, gluconeogenesis and the macrophage inflammatory response. Acts as a receptor for heme which stimulates its interaction with the NCOR1/HDAC3 corepressor complex, enhancing transcriptional repression. Recognizes two classes of DNA response elements within the promoter of its target genes and can bind to DNA as either monomers or homodimers, depending on the nature of the response element. Binds as a monomer to a response element composed of the consensus half-site motif 5'-[A/G]GGTCA-3' preceded by an A/T-rich 5' sequence (RevRE), or as a homodimer to a direct repeat of the core motif spaced by two nucleotides (RevDR-2). Acts as a potent competitive repressor of ROR alpha (RORA) function and regulates the levels of its ligand heme by repressing the expression of PPARGC1A, a potent inducer of heme synthesis. Regulates lipid metabolism by repressing the expression of APOC3 and by influencing the activity of sterol response element binding proteins (SREBPs); represses INSIG2 which interferes with the proteolytic activation of SREBPs which in turn govern the rhythmic expression of enzymes with key functions in sterol and fatty acid synthesis. Regulates gluconeogenesis via repression of G6PC1 and PEPCK and adipocyte differentiation via repression of PPARG. Regulates glucagon release in pancreatic alpha-cells via the AMPK-NAMPT-SIRT1 pathway and the proliferation, glucose-induced insulin secretion and expression of key lipogenic genes in pancreatic-beta cells. Positively regulates bile acid synthesis by increasing hepatic expression of CYP7A1 via repression of NR0B2 and NFIL3 which are negative regulators of CYP7A1. Modulates skeletal muscle oxidative capacity by regulating mitochondrial biogenesis and autophagy; controls mitochondrial biogenesis and respiration by interfering with the STK11-PRKAA1/2-SIRT1-PPARGC1A signaling pathway. Represses the expression of SERPINE1/PAI1, an important modulator of cardiovascular disease and the expression of inflammatory cytokines and chemokines in macrophages. Represses gene expression at a distance in macrophages by inhibiting the transcription of enhancer-derived RNAs (eRNAs). Plays a role in the circadian regulation of body temperature and negatively regulates thermogenic transcriptional programs in brown adipose tissue (BAT); imposes a circadian oscillation in BAT activity, increasing body temperature when awake and depressing thermogenesis during sleep. In concert with NR2E3, regulates transcriptional networks critical for photoreceptor development and function. In addition to its activity as a repressor, can also act as a transcriptional activator. In the ovarian granulosa cells acts as a transcriptional activator of STAR which plays a role in steroid biosynthesis. In collaboration with SP1, activates GJA1 transcription in a heme-independent manner. Represses the transcription of CYP2B10, CYP4A10 and CYP4A14. Represses the transcription of CES2. Represses and regulates the circadian expression of TSHB in a NCOR1-dependent manner. Negatively regulates the protein stability of NR3C1 and influences the time-dependent subcellular distribution of NR3C1, thereby affecting its transcriptional regulatory activity. Plays a critical role in the circadian control of neutrophilic inflammation in the lung; under resting, non-stress conditions, acts as a rhythmic repressor to limit inflammatory activity whereas in the presence of inflammatory triggers undergoes ubiquitin-mediated degradation thereby relieving inhibition of the inflammatory response. Plays a key role in the circadian regulation of microglial activation and neuroinflammation; suppresses microglial activation through the NF-kappaB pathway in the central nervous system. Plays a role in the regulation of the diurnal rhythms of lipid and protein metabolism in the skeletal muscle via transcriptional repression of genes controlling lipid and amino acid metabolism in the muscle. The sequence is that of Nuclear receptor subfamily 1 group D member 1 (NR1D1) from Ovis aries (Sheep).